The sequence spans 217 residues: Imidazole glycerol phosphate synthase subunit HisH (217 aa).

A Glutamine amidotransferase type-1 domain is found at 5–217; the sequence is RVGIINYGVG…LRLLANFLTL (213 aa). The active-site Nucleophile is the Cys93. Active-site residues include His199 and Glu201.

Heterodimer of HisH and HisF.

The protein resides in the cytoplasm. It catalyses the reaction 5-[(5-phospho-1-deoxy-D-ribulos-1-ylimino)methylamino]-1-(5-phospho-beta-D-ribosyl)imidazole-4-carboxamide + L-glutamine = D-erythro-1-(imidazol-4-yl)glycerol 3-phosphate + 5-amino-1-(5-phospho-beta-D-ribosyl)imidazole-4-carboxamide + L-glutamate + H(+). The enzyme catalyses L-glutamine + H2O = L-glutamate + NH4(+). The protein operates within amino-acid biosynthesis; L-histidine biosynthesis; L-histidine from 5-phospho-alpha-D-ribose 1-diphosphate: step 5/9. IGPS catalyzes the conversion of PRFAR and glutamine to IGP, AICAR and glutamate. The HisH subunit catalyzes the hydrolysis of glutamine to glutamate and ammonia as part of the synthesis of IGP and AICAR. The resulting ammonia molecule is channeled to the active site of HisF. This is Imidazole glycerol phosphate synthase subunit HisH from Helicobacter hepaticus (strain ATCC 51449 / 3B1).